The primary structure comprises 632 residues: MAU2 chromatid cohesion factor homolog (632 aa).

TPR repeat units follow at residues 453-486 (GGFYYVQGLHAFHKNSFHEAKRFLRETLKMANAE) and 493-526 (SCSLVLLSHVFLSIGNSKESMNMVTPAMQLASKI).

The protein belongs to the SCC4/mau-2 family. As to quaternary structure, interacts with Nipped-B to form the cohesin loading complex.

It localises to the nucleus. The protein resides in the nucleoplasm. Functionally, required for association of the cohesin complex with chromatin during interphase. Plays a role in sister chromatid cohesion and normal progression through prometaphase. The protein is MAU2 chromatid cohesion factor homolog of Drosophila sechellia (Fruit fly).